Consider the following 146-residue polypeptide: Hemoglobin subunit beta-1 (146 aa).

The Globin domain maps to 2-146; sequence VWTNEERSII…VVSALGKQYH (145 aa). 2 residues coordinate heme b: His63 and His92.

It belongs to the globin family. As to quaternary structure, hb1 is a heterotetramer of two alpha chains and two beta-1 chains. Red blood cells.

Functionally, involved in oxygen transport from gills to the various peripheral tissues. The chain is Hemoglobin subunit beta-1 (hbb1) from Pseudaphritis urvillii (Congolli).